The primary structure comprises 103 residues: Large ribosomal subunit protein uL24 (103 aa).

It belongs to the universal ribosomal protein uL24 family. As to quaternary structure, part of the 50S ribosomal subunit.

Its function is as follows. One of two assembly initiator proteins, it binds directly to the 5'-end of the 23S rRNA, where it nucleates assembly of the 50S subunit. One of the proteins that surrounds the polypeptide exit tunnel on the outside of the subunit. This Sinorhizobium medicae (strain WSM419) (Ensifer medicae) protein is Large ribosomal subunit protein uL24.